A 950-amino-acid chain; its full sequence is MSTTSLQHFSHSYSPFPSSRSSNRMAQSQTSGLDTLAEGSQYALEQLQMSREAAGDGEATNSMGKPKDQYQIDNDNHHNNHSLPSFKNSSQRDPLVEARSTIRKNSASAPVRRRISRACDQCNQLRTKCDGQNPCAHCIEFGLTCEYARERKKRGKASKKDLAAAAAAATNPGQPNGSSGKEDAAMVGGHTSPDRRPTLNGRYDPAFEVPRNLNGSAQHSEASGMVGMQNSQHLPPHSQSSMGGGLEGLSLNGYNGLNDSSRPSMPVPELQSLHMLHNSHTNPRSPSSVLPHHRYNGGYNDSAYSLMNPQEPNSTSISHFRLGSSTENPPNSFLGLSPPAQSPGWLPLPSPSPANFPSFSMASFSTTLRYPVLHPVLPHIASIIPQSLACDLLDVYFTSSSSSHLSPQSPYVVGYIFRKQSFLHPTKPRVCTPGLLASMLWVAAQTSDAPFLTSPPSARGRVCQKLLELTIGLLRPLIHGPAPGETSPNYAANMVINGVALGGFGVSMDQLGAQSSATGAVDDVATYVHLATVISASEYKAASMRWWTAAWSLARELKLGRELPPNTPHSRPDAERDGDPDADLSKRHPPPLITSMGHGPGNTVINITEEEREERRRLWWLLYATDRHLALCYNRPLTLLDKECEGLLQPMNDDLWQAGDFATYRQAGPPVECTGHSMFGYFLPLMTILGEIVDLQQARNHPRFGLAFRNSAECEAQVLEIARQLDVYAQSLKEFETRYTSSLALGAAETEAAMEGSHLNHVSPSGRSSSTVESRVNESIVHTKMVVAYGTHIMHVLHILLAGKWDPINLLDDNDLWISSESFVAAMGHAVGAAEAASEILEYDPDLSFMPFFFGIYLLQGSFLLLLTADKLQGDASPSVVRACETIVRAHEACVVTLNTEYQRTFRKVMRSALAQVRGRLPEDFGEQQQRRREVLALYRWTGDGSGLAL.

The tract at residues 1–97 (MSTTSLQHFS…NSSQRDPLVE (97 aa)) is disordered. Residues 8–22 (HFSHSYSPFPSSRSS) show a composition bias toward low complexity. The segment covering 23–33 (NRMAQSQTSGL) has biased composition (polar residues). A compositionally biased stretch (basic and acidic residues) spans 65 to 78 (KPKDQYQIDNDNHH). The span at 81-92 (HSLPSFKNSSQR) shows a compositional bias: polar residues. Positions 119-145 (CDQCNQLRTKCDGQNPCAHCIEFGLTC) form a DNA-binding region, zn(2)-C6 fungal-type. 3 disordered regions span residues 163 to 247 (AAAA…GGLE), 300 to 329 (NDSA…TENP), and 561 to 603 (RELP…PGNT). Residues 302 to 329 (SAYSLMNPQEPNSTSISHFRLGSSTENP) show a composition bias toward polar residues. Residues 570-586 (SRPDAERDGDPDADLSK) are compositionally biased toward basic and acidic residues.

This sequence belongs to the xlnR/xlr1 family.

Its subcellular location is the nucleus. Functionally, transcriptional activator of the xylanolytic system. Involved in the regulation of extracellular cellulolytic and xylanolytic genes and in the regulation of the intracellular activities of D-xylose catabolic genes in the pentose catabolic pathway (PCP) in response to the presence of D-xylose. This is Xylanolytic transcriptional activator xlnR (xlnR) from Neosartorya fischeri (strain ATCC 1020 / DSM 3700 / CBS 544.65 / FGSC A1164 / JCM 1740 / NRRL 181 / WB 181) (Aspergillus fischerianus).